A 354-amino-acid polypeptide reads, in one-letter code: Chorismate synthase (354 aa).

Residue R48 coordinates NADP(+). FMN-binding positions include 126-128 (RAS), A278, 293-297 (KPIPS), and R319.

It belongs to the chorismate synthase family. As to quaternary structure, homotetramer. FMNH2 serves as cofactor.

The enzyme catalyses 5-O-(1-carboxyvinyl)-3-phosphoshikimate = chorismate + phosphate. It participates in metabolic intermediate biosynthesis; chorismate biosynthesis; chorismate from D-erythrose 4-phosphate and phosphoenolpyruvate: step 7/7. Its function is as follows. Catalyzes the anti-1,4-elimination of the C-3 phosphate and the C-6 proR hydrogen from 5-enolpyruvylshikimate-3-phosphate (EPSP) to yield chorismate, which is the branch point compound that serves as the starting substrate for the three terminal pathways of aromatic amino acid biosynthesis. This reaction introduces a second double bond into the aromatic ring system. This Desulfosudis oleivorans (strain DSM 6200 / JCM 39069 / Hxd3) (Desulfococcus oleovorans) protein is Chorismate synthase.